A 210-amino-acid polypeptide reads, in one-letter code: Histone H1A (210 aa).

Disordered stretches follow at residues 1–49 and 101–210; these read MAEA…VSEQ and KGSG…PKKK. Composition is skewed to low complexity over residues 26–45 and 129–142; these read KKAAAARGAAKSKKPSSGPS and PLAAEAKKPAAAAK. Residues 42–113 form the H15 domain; the sequence is SGPSVSEQIV…GASGSFKLNK (72 aa). Composition is skewed to basic residues over residues 143–153 and 160–180; these read KTAKSPKKPKK and SPKKLKKPAKAAKSPAKKTAV. Over residues 181–192 the composition is skewed to low complexity; that stretch reads KPKVAAKSPAKA. Residues 193–210 show a composition bias toward basic residues; that stretch reads KAAKPKVAKAKKAAPKKK.

Belongs to the histone H1/H5 family.

The protein resides in the nucleus. It is found in the chromosome. Histones H1 are necessary for the condensation of nucleosome chains into higher-order structures. This is Histone H1A from Xenopus laevis (African clawed frog).